A 311-amino-acid chain; its full sequence is Solute carrier family 25 member 36-A (311 aa).

Solcar repeat units lie at residues 4–108, 116–203, and 224–308; these read RDTL…SKEK, DSTQ…IKRK, and SDFV…VVYL. 6 helical membrane-spanning segments follow: residues 7-27, 41-57, 111-131, 180-200, 226-246, and 291-311; these read LVHL…TCPL, FYIS…ASVA, NVFD…AGFT, MSAS…YESI, FVGM…IAYP, and QIPN…LLNG.

This sequence belongs to the mitochondrial carrier (TC 2.A.29) family.

It localises to the mitochondrion inner membrane. This chain is Solute carrier family 25 member 36-A (slc25a36a), found in Danio rerio (Zebrafish).